A 193-amino-acid chain; its full sequence is Rho-related protein racF1 (193 aa).

10 to 17 (GDGAVGKT) provides a ligand contact to GTP. The short motif at 32-40 (YIPTVFDNY) is the Effector region element. GTP is bound by residues 57 to 61 (DTAGQ) and 115 to 118 (TKQD). The residue at position 190 (cysteine 190) is a Cysteine methyl ester. A lipid anchor (S-geranylgeranyl cysteine) is attached at cysteine 190. The propeptide at 191-193 (TIM) is removed in mature form.

This sequence belongs to the small GTPase superfamily. Rho family. As to quaternary structure, interacts with pakB.

The protein localises to the membrane. Might act in concert and/or share functions with other members of the RHO family in the regulation of a subset of cytoskeletal rearrangements that are required for these processes. This is Rho-related protein racF1 (racF1) from Dictyostelium discoideum (Social amoeba).